A 485-amino-acid polypeptide reads, in one-letter code: Arginine/ornithine antiporter ArcD (485 aa).

A run of 11 helical transmembrane segments spans residues 23-43 (ALLP…LLGL), 48-68 (PLLW…GYTW), 79-99 (IVMG…IASW), 116-136 (LTPA…ATAI), 148-168 (IALV…AGAI), 203-223 (MFPN…VLGL), 246-266 (GTYT…GLAI), 269-289 (YPAL…SILI), 323-343 (LEGS…GGIL), 362-382 (SVGG…ALTA), and 441-461 (VLSY…VVIM).

The protein belongs to the NhaC Na(+)/H(+) (TC 2.A.35) antiporter family.

Its subcellular location is the cell membrane. The enzyme catalyses L-ornithine(in) + L-arginine(out) = L-ornithine(out) + L-arginine(in). Its function is as follows. Uptake of arginine from the medium in exchange for ornithine. This is Arginine/ornithine antiporter ArcD (arcD) from Halobacterium salinarum (strain ATCC 700922 / JCM 11081 / NRC-1) (Halobacterium halobium).